The primary structure comprises 64 residues: Large ribosomal subunit protein bL33 (64 aa).

The protein belongs to the bacterial ribosomal protein bL33 family.

This chain is Large ribosomal subunit protein bL33, found in Thermosynechococcus vestitus (strain NIES-2133 / IAM M-273 / BP-1).